The following is a 500-amino-acid chain: L-arabinose isomerase (500 aa).

Residues glutamate 306, glutamate 333, histidine 350, and histidine 450 each coordinate Mn(2+).

Belongs to the arabinose isomerase family. Homohexamer. Requires Mn(2+) as cofactor.

It carries out the reaction beta-L-arabinopyranose = L-ribulose. It participates in carbohydrate degradation; L-arabinose degradation via L-ribulose; D-xylulose 5-phosphate from L-arabinose (bacterial route): step 1/3. Functionally, catalyzes the conversion of L-arabinose to L-ribulose. The sequence is that of L-arabinose isomerase from Salmonella choleraesuis (strain SC-B67).